A 348-amino-acid chain; its full sequence is UDP-3-O-acylglucosamine N-acyltransferase (348 aa).

His243 functions as the Proton acceptor in the catalytic mechanism.

This sequence belongs to the transferase hexapeptide repeat family. LpxD subfamily. In terms of assembly, homotrimer.

The catalysed reaction is a UDP-3-O-[(3R)-3-hydroxyacyl]-alpha-D-glucosamine + a (3R)-hydroxyacyl-[ACP] = a UDP-2-N,3-O-bis[(3R)-3-hydroxyacyl]-alpha-D-glucosamine + holo-[ACP] + H(+). It participates in bacterial outer membrane biogenesis; LPS lipid A biosynthesis. Its function is as follows. Catalyzes the N-acylation of UDP-3-O-acylglucosamine using 3-hydroxyacyl-ACP as the acyl donor. Is involved in the biosynthesis of lipid A, a phosphorylated glycolipid that anchors the lipopolysaccharide to the outer membrane of the cell. The polypeptide is UDP-3-O-acylglucosamine N-acyltransferase (Hahella chejuensis (strain KCTC 2396)).